Reading from the N-terminus, the 500-residue chain is MAAASVSAASDSQFSSVLAEPSRSNGNMVRHSSSPYVLYPPDKPFLNSDLRRSPNKPTFAYPESNSRAIFSALKNLQDKIRRLELERIQAEESVKTLSRETIEYKKVLDEQIQERENSKNEESKHNQELASQLVAAENKCNLLEKQLEYMRNMIKHAEMERTSVLEKQVSLERERQHDQTHVQSQLEKLDLLEQEYNKLTAMQALAEKKMQELESKLREEEQERKRMQARAAELQSGLEANRLIFEDKTTSCVSTSTRKIKKKKSKPPEKKGSRTYFGAQPHYRLCLGDMPFVAGTSTSPSHAVVANVQHVLHLMKHHSKALCNDRVVNSVPLAKQACSRVSKSKKSVVPPSSSVNEELSDVLQTLQDEFGQMSFDHQQLTKLIQESPTVELKDNLECELEALVGRMEAKANQITKVRKYQAQLEKQNIDKQKKELKANKKTLDEEGNSSGRSSGVPRTASKKDLAKQRPGEKSRKNLQLLKDMQTIQNSLQSSNLCWDY.

Positions 1 to 16 (MAAASVSAASDSQFSS) are enriched in low complexity. Residues 1 to 59 (MAAASVSAASDSQFSSVLAEPSRSNGNMVRHSSSPYVLYPPDKPFLNSDLRRSPNKPTF) are disordered. The span at 22–35 (SRSNGNMVRHSSSP) shows a compositional bias: polar residues. S53 carries the phosphoserine modification. A centrosome localization domain (CLD) region spans residues 58 to 239 (TFAYPESNSR…RAAELQSGLE (182 aa)). The stretch at 63-242 (ESNSRAIFSA…ELQSGLEANR (180 aa)) forms a coiled coil. 2 disordered regions span residues 256 to 275 (STRKIKKKKSKPPEKKGSRT) and 432 to 478 (QKKE…RKNL). The segment at 278 to 491 (GAQPHYRLCL…KDMQTIQNSL (214 aa)) is mediates interaction with microtubules. A coiled-coil region spans residues 389–449 (TVELKDNLEC…KKTLDEEGNS (61 aa)). 2 stretches are compositionally biased toward basic and acidic residues: residues 432–444 (QKKELKANKKTLD) and 461–475 (SKKDLAKQRPGEKSR).

The protein belongs to the translokin family. In terms of assembly, interacts with FGF2 and RAP80. Does not interact with FGF1 or FGF2 isoform 24 kDa. Homodimer and homooligomer. Interacts with microtubules. In terms of tissue distribution, ubiquitous (at protein level). Expressed in testis, predominantly in round spermatids. Low expression is detected in other tissues.

It is found in the nucleus. The protein resides in the cytoplasm. The protein localises to the cytoskeleton. It localises to the microtubule organizing center. Its subcellular location is the centrosome. Centrosomal protein which may be required for microtubule attachment to centrosomes. May act by forming ring-like structures around microtubules. Mediates nuclear translocation and mitogenic activity of the internalized growth factor FGF2. This Mus musculus (Mouse) protein is Centrosomal protein of 57 kDa (Cep57).